The primary structure comprises 227 residues: Lipoprotein-releasing system ATP-binding protein LolD (227 aa).

Positions 6–227 (LKCENINKFY…MQDGLLKEGA (222 aa)) constitute an ABC transporter domain. 42–49 (GSSGSGKS) provides a ligand contact to ATP.

The protein belongs to the ABC transporter superfamily. Lipoprotein translocase (TC 3.A.1.125) family. In terms of assembly, the complex is composed of two ATP-binding proteins (LolD) and two transmembrane proteins (LolC and LolE).

Its subcellular location is the cell inner membrane. In terms of biological role, part of the ABC transporter complex LolCDE involved in the translocation of mature outer membrane-directed lipoproteins, from the inner membrane to the periplasmic chaperone, LolA. Responsible for the formation of the LolA-lipoprotein complex in an ATP-dependent manner. This Haemophilus influenzae (strain 86-028NP) protein is Lipoprotein-releasing system ATP-binding protein LolD.